The sequence spans 447 residues: Cysteine--tRNA ligase (447 aa).

Zn(2+) is bound at residue Cys-28. The short motif at 30–40 (PTVYNYIHVGN) is the 'HIGH' region element. Cys-211, His-236, and Glu-240 together coordinate Zn(2+). A 'KMSKS' region motif is present at residues 268-272 (KMSKS). Lys-271 serves as a coordination point for ATP.

The protein belongs to the class-I aminoacyl-tRNA synthetase family. In terms of assembly, monomer. Zn(2+) serves as cofactor.

It is found in the cytoplasm. It carries out the reaction tRNA(Cys) + L-cysteine + ATP = L-cysteinyl-tRNA(Cys) + AMP + diphosphate. The polypeptide is Cysteine--tRNA ligase (Streptococcus pneumoniae serotype 4 (strain ATCC BAA-334 / TIGR4)).